Reading from the N-terminus, the 222-residue chain is 7-cyano-7-deazaguanine synthase (222 aa).

Residue 11 to 21 (FSGGQDSTTCL) coordinates ATP. Zn(2+) is bound by residues Cys-187, Cys-195, Cys-198, and Cys-201.

Belongs to the QueC family. It depends on Zn(2+) as a cofactor.

The enzyme catalyses 7-carboxy-7-deazaguanine + NH4(+) + ATP = 7-cyano-7-deazaguanine + ADP + phosphate + H2O + H(+). Its pathway is purine metabolism; 7-cyano-7-deazaguanine biosynthesis. Catalyzes the ATP-dependent conversion of 7-carboxy-7-deazaguanine (CDG) to 7-cyano-7-deazaguanine (preQ(0)). The protein is 7-cyano-7-deazaguanine synthase of Actinobacillus pleuropneumoniae serotype 5b (strain L20).